A 360-amino-acid chain; its full sequence is Catabolic L-serine/threonine dehydratase (360 aa).

Residue S2 is modified to N-acetylserine. Position 37 is an N6-(pyridoxal phosphate)lysine (K37).

Belongs to the serine/threonine dehydratase family. Requires pyridoxal 5'-phosphate as cofactor.

Its subcellular location is the mitochondrion. The catalysed reaction is L-serine = pyruvate + NH4(+). It carries out the reaction L-threonine = 2-oxobutanoate + NH4(+). In Saccharomyces cerevisiae (strain ATCC 204508 / S288c) (Baker's yeast), this protein is Catabolic L-serine/threonine dehydratase (CHA1).